A 543-amino-acid polypeptide reads, in one-letter code: Sensor histidine kinase DcuS (543 aa).

Over 1–20 (MRHSLPYRMLRKRPMKLSTT) the chain is Cytoplasmic. A helical membrane pass occupies residues 21 to 41 (VILMVSAVLFSVLLVVHLIYF). Residues 42-181 (SQISDMTRDG…VTQQINDSRW (140 aa)) are Periplasmic-facing. (R)-malate-binding positions include 107–110 (RYSH), Lys-121, 140–142 (GFL), and Arg-147. The helical transmembrane segment at 182–202 (SIIWSVLFGMLVGLIGTCILV) threads the bilayer. At 203–543 (KVLKKILFGL…IPWDGERSNR (341 aa)) the chain is on the cytoplasmic side. A PAS domain is found at 212–323 (LEPYEISTLF…IIGAISTFRD (112 aa)). Residues 346–538 (ERSHEFMNKL…QFFVQIPWDG (193 aa)) enclose the Histidine kinase domain. The residue at position 349 (His-349) is a Phosphohistidine; by autocatalysis.

As to quaternary structure, homodimer. In terms of processing, autophosphorylated. The phosphoryl group is rapidly transferred to DcuR.

It localises to the cell inner membrane. It catalyses the reaction ATP + protein L-histidine = ADP + protein N-phospho-L-histidine.. Functionally, member of the two-component regulatory system DcuR/DcuS. Involved in the C4-dicarboxylate-stimulated regulation of the genes encoding the anaerobic fumarate respiratory system (frdABCD; nuoAN; dcuB; sdhCDAB; etc.). Weakly regulates the aerobic C4-dicarboxylate transporter dctA. Activates DcuR by phosphorylation. The sequence is that of Sensor histidine kinase DcuS (dcuS) from Escherichia coli O157:H7.